The chain runs to 156 residues: Small ribosomal subunit protein uS7 (156 aa).

Belongs to the universal ribosomal protein uS7 family. As to quaternary structure, part of the 30S ribosomal subunit. Contacts proteins S9 and S11.

Its function is as follows. One of the primary rRNA binding proteins, it binds directly to 16S rRNA where it nucleates assembly of the head domain of the 30S subunit. Is located at the subunit interface close to the decoding center, probably blocks exit of the E-site tRNA. In Geotalea daltonii (strain DSM 22248 / JCM 15807 / FRC-32) (Geobacter daltonii), this protein is Small ribosomal subunit protein uS7.